Reading from the N-terminus, the 461-residue chain is Argininosuccinate lyase (461 aa).

It belongs to the lyase 1 family. Argininosuccinate lyase subfamily.

It is found in the cytoplasm. It carries out the reaction 2-(N(omega)-L-arginino)succinate = fumarate + L-arginine. It functions in the pathway amino-acid biosynthesis; L-arginine biosynthesis; L-arginine from L-ornithine and carbamoyl phosphate: step 3/3. In Syntrophotalea carbinolica (strain DSM 2380 / NBRC 103641 / GraBd1) (Pelobacter carbinolicus), this protein is Argininosuccinate lyase.